We begin with the raw amino-acid sequence, 354 residues long: Phosphatidylserine decarboxylase proenzyme (354 aa).

Residues 18-36 (YLITGVTILSFILMFQYKY) form a helical membrane-spanning segment. Catalysis depends on charge relay system; for autoendoproteolytic cleavage activity residues Asp-139, His-198, and Ser-308. Residue Ser-308 is the Schiff-base intermediate with substrate; via pyruvic acid; for decarboxylase activity of the active site. A Pyruvic acid (Ser); by autocatalysis modification is found at Ser-308.

It belongs to the phosphatidylserine decarboxylase family. PSD-B subfamily. Eukaryotic type I sub-subfamily. As to quaternary structure, heterodimer of a large membrane-associated beta subunit and a small pyruvoyl-containing alpha subunit. It depends on pyruvate as a cofactor. Is synthesized initially as an inactive proenzyme. Formation of the active enzyme involves a self-maturation process in which the active site pyruvoyl group is generated from an internal serine residue via an autocatalytic post-translational modification. Two non-identical subunits are generated from the proenzyme in this reaction, and the pyruvate is formed at the N-terminus of the alpha chain, which is derived from the carboxyl end of the proenzyme. The autoendoproteolytic cleavage occurs by a canonical serine protease mechanism, in which the side chain hydroxyl group of the serine supplies its oxygen atom to form the C-terminus of the beta chain, while the remainder of the serine residue undergoes an oxidative deamination to produce ammonia and the pyruvoyl prosthetic group on the alpha chain. During this reaction, the Ser that is part of the protease active site of the proenzyme becomes the pyruvoyl prosthetic group, which constitutes an essential element of the active site of the mature decarboxylase.

The protein resides in the membrane. It is found in the endoplasmic reticulum membrane. It catalyses the reaction a 1,2-diacyl-sn-glycero-3-phospho-L-serine + H(+) = a 1,2-diacyl-sn-glycero-3-phosphoethanolamine + CO2. Its pathway is phospholipid metabolism; phosphatidylethanolamine biosynthesis; phosphatidylethanolamine from CDP-diacylglycerol: step 2/2. Protease activity is inhibited by PMSF. Catalyzes the formation of phosphatidylethanolamine (PtdEtn) from phosphatidylserine (PtdSer). Plays a central role in phospholipid metabolism and in the interorganelle trafficking of phosphatidylserine. This chain is Phosphatidylserine decarboxylase proenzyme, found in Plasmodium knowlesi (strain H).